Reading from the N-terminus, the 161-residue chain is DNA-directed RNA polymerase 18 kDa subunit (161 aa).

Belongs to the poxviridae DNA-directed RNA polymerase 18 kDa subunit family. As to quaternary structure, the DNA-dependent RNA polymerase used for intermediate and late genes expression consists of eight subunits Rpo30/OPG66, Rpo7/OPG90, Rpo22/OPG103, Rpo147/OPG105, Rpo18/OPG119, Rpo19/OPG131, Rpo132/OPG151 and Rpo35/OPG156. The same holoenzyme, with the addition of the transcription-specificity factor OPG109, is used for early gene expression.

It is found in the virion. It catalyses the reaction RNA(n) + a ribonucleoside 5'-triphosphate = RNA(n+1) + diphosphate. In terms of biological role, part of the DNA-dependent RNA polymerase which catalyzes the transcription of viral DNA into RNA using the four ribonucleoside triphosphates as substrates. Responsible for the transcription of early, intermediate and late genes. DNA-dependent RNA polymerase associates with the early transcription factor (ETF), itself composed of OPG118 and OPG133, thereby allowing the early genes transcription. Late transcription, and probably also intermediate transcription, require newly synthesized RNA polymerase. The protein is DNA-directed RNA polymerase 18 kDa subunit (OPG119) of Homo sapiens (Human).